The primary structure comprises 126 residues: Small ribosomal subunit protein bS6 (126 aa).

Residues 107–126 (RDRERGERSERPRDDFAPAA) are disordered.

This sequence belongs to the bacterial ribosomal protein bS6 family.

Its function is as follows. Binds together with bS18 to 16S ribosomal RNA. The protein is Small ribosomal subunit protein bS6 of Caulobacter sp. (strain K31).